We begin with the raw amino-acid sequence, 478 residues long: Alpha-1,3-mannosyl-glycoprotein 4-beta-N-acetylglucosaminyltransferase C (478 aa).

Residues 1–25 lie on the Cytoplasmic side of the membrane; the sequence is MLKFYQMKYIFQILDKMRCLRKRST. The chain crosses the membrane as a helical; Signal-anchor for type II membrane protein span at residues 26–43; the sequence is VSFLGVLVVFLLFMNLYI. Residues 44-478 lie on the Lumenal side of the membrane; the sequence is EDSYVLEGDK…IIRSISIWTS (435 aa). 2 N-linked (GlcNAc...) asparagine glycosylation sites follow: Asn-84 and Asn-215.

Belongs to the glycosyltransferase 54 family. The cofactor is a divalent metal cation.

The protein resides in the golgi apparatus membrane. The enzyme catalyses N(4)-{beta-D-GlcNAc-(1-&gt;2)-alpha-D-Man-(1-&gt;3)-[beta-D-GlcNAc-(1-&gt;2)-alpha-D-Man-(1-&gt;6)]-beta-D-Man-(1-&gt;4)-beta-D-GlcNAc-(1-&gt;4)-beta-D-GlcNAc}-L-asparaginyl-[protein] + UDP-N-acetyl-alpha-D-glucosamine = N(4)-{beta-D-GlcNAc-(1-&gt;2)-[beta-D-GlcNAc-(1-&gt;4)]-alpha-D-Man-(1-&gt;3)-[beta-D-GlcNAc-(1-&gt;2)-alpha-D-Man-(1-&gt;6)]-beta-D-Man-(1-&gt;4)-beta-D-GlcNAc-(1-&gt;4)-beta-D-GlcNAc}-L-asparaginyl-[protein] + UDP + H(+). It functions in the pathway protein modification; protein glycosylation. Its function is as follows. Glycosyltransferase that participates in the transfer of N-acetylglucosamine (GlcNAc) to the core mannose residues of N-linked glycans. Catalyzes the formation of the GlcNAcbeta1-4 branch on the GlcNAcbeta1-2Manalpha1-3 arm of the core structure of N-linked glycans. Essential for the production of tri- and tetra-antennary N-linked sugar chains. Does not catalyze the transfer of GlcNAc to the Manalpha1-6 arm to form GlcNAcBeta1-4Manalpha1-6 linkage ('GnT-VI' activity). In Mus musculus (Mouse), this protein is Alpha-1,3-mannosyl-glycoprotein 4-beta-N-acetylglucosaminyltransferase C (Mgat4c).